Consider the following 751-residue polypeptide: Kelch-like protein 1 (751 aa).

Low complexity-rich tracts occupy residues 25–36 (PSPASSSPAGGS) and 74–90 (SSSS…ASSS). Disordered stretches follow at residues 25–54 (PSPA…GPSQ), 69–98 (FWKK…LNGT), and 157–184 (SSIQ…SDLD). Residues 170 to 184 (LTSTNHSLTPQSDLD) show a composition bias toward polar residues. The BTB domain occupies 215-282 (CDVILIVGNR…AYTGCLELKE (68 aa)). Kelch repeat units lie at residues 463–509 (TLYA…VIDD), 510–556 (KLFV…VLEG), 558–603 (IYAV…ALNG), 604–650 (KLYS…TCDG), 652–703 (LYAV…LLGD), and 704–750 (RLYA…VIKQ).

Highly expressed in brain.

It is found in the cytoplasm. The protein localises to the cytoskeleton. May play a role in organizing the actin cytoskeleton of the brain cells. The chain is Kelch-like protein 1 (Klhl1) from Mus musculus (Mouse).